Here is a 315-residue protein sequence, read N- to C-terminus: Homoserine kinase (315 aa).

97 to 107 (PPARGLGSSAT) contacts ATP.

Belongs to the GHMP kinase family. Homoserine kinase subfamily.

The protein localises to the cytoplasm. The enzyme catalyses L-homoserine + ATP = O-phospho-L-homoserine + ADP + H(+). The protein operates within amino-acid biosynthesis; L-threonine biosynthesis; L-threonine from L-aspartate: step 4/5. Catalyzes the ATP-dependent phosphorylation of L-homoserine to L-homoserine phosphate. This chain is Homoserine kinase, found in Prochlorococcus marinus (strain SARG / CCMP1375 / SS120).